A 70-amino-acid chain; its full sequence is Kappa-conotoxin-like Sx11.2 (70 aa).

The N-terminal stretch at 1-26 (MMFRVTSVGCLLLVIVFLNLVVPTSA) is a signal peptide. Intrachain disulfides connect Cys-27–Cys-41, Cys-34–Cys-46, Cys-40–Cys-50, and Cys-45–Cys-54. Residues Glu-30, Glu-35, and Glu-44 each carry the 4-carboxyglutamate modification. Pro-53 is subject to 4-hydroxyproline. A Proline amide modification is found at Pro-57. Positions 61-70 (SKLQEFFRQR) are excised as a propeptide.

It belongs to the conotoxin I2 superfamily. As to expression, expressed by the venom duct.

Its subcellular location is the secreted. Functionally, modulator of potassium channels, specifically up-modulates the calcium and voltage-gated BK channels, has no effect on single channel conductance, but increases the open probability of BK channels. The sequence is that of Kappa-conotoxin-like Sx11.2 from Conus striolatus (Cone snail).